A 102-amino-acid polypeptide reads, in one-letter code: Protein translation factor SUI1 homolog (102 aa).

This sequence belongs to the SUI1 family.

The chain is Protein translation factor SUI1 homolog from Methanococcus maripaludis (strain C5 / ATCC BAA-1333).